A 35-amino-acid chain; its full sequence is Jingzhaotoxin F6-27.63 (35 aa).

Disulfide bonds link Cys-2/Cys-17, Cys-9/Cys-22, and Cys-16/Cys-29.

This sequence belongs to the neurotoxin 10 (Hwtx-1) family. 49 (Jztx-F6) subfamily. As to expression, expressed by the venom gland.

The protein localises to the secreted. Probable ion channel inhibitor. The sequence is that of Jingzhaotoxin F6-27.63 from Chilobrachys guangxiensis (Chinese earth tiger tarantula).